We begin with the raw amino-acid sequence, 1342 residues long: DNA-directed RNA polymerase subunit beta (1342 aa).

This sequence belongs to the RNA polymerase beta chain family. In terms of assembly, the RNAP catalytic core consists of 2 alpha, 1 beta, 1 beta' and 1 omega subunit. When a sigma factor is associated with the core the holoenzyme is formed, which can initiate transcription.

The enzyme catalyses RNA(n) + a ribonucleoside 5'-triphosphate = RNA(n+1) + diphosphate. DNA-dependent RNA polymerase catalyzes the transcription of DNA into RNA using the four ribonucleoside triphosphates as substrates. The polypeptide is DNA-directed RNA polymerase subunit beta (Mannheimia succiniciproducens (strain KCTC 0769BP / MBEL55E)).